The sequence spans 521 residues: UPF0053 protein BU323 (521 aa).

The next 7 helical transmembrane spans lie at 13 to 33, 49 to 69, 80 to 100, 125 to 145, 150 to 170, 185 to 205, and 207 to 227; these read LLTLVILEVVLGIDNLIFVAI, IGLGLALVMRLALLSLISWIV, FFSLSIRDIILLFGGFFLLFK, FWAVVIQIVVLDAVFSLDAII, MVNQLLIMMIAVILATFLMLL, VVVLCLSFLLMIGFSLVTEAL, and FCIPKGYLYAAIGFSILIEIF. 2 CBS domains span residues 311 to 370 and 374 to 434; these read MTPR…KIDA and SSKI…DADE.

It belongs to the UPF0053 family.

It localises to the cell membrane. This chain is UPF0053 protein BU323, found in Buchnera aphidicola subsp. Acyrthosiphon pisum (strain APS) (Acyrthosiphon pisum symbiotic bacterium).